A 595-amino-acid chain; its full sequence is Parathyroid hormone/parathyroid hormone-related peptide receptor (595 aa).

Residues 1 to 28 (MGAVRIAPGLALLLCCPVLSSAYALVDA) form the signal peptide. Residues 29–188 (DDVMTKEEQI…REREVFDRLG (160 aa)) lie on the Extracellular side of the membrane. Cystine bridges form between Cys48-Cys117, Cys108-Cys148, and Cys131-Cys170. The disordered stretch occupies residues 66-103 (DKGWASASTSGKPKKEKASGKLYPESEEDKEVPTGSRH). N-linked (GlcNAc...) asparagine glycans are attached at residues Asn151, Asn161, Asn166, and Asn176. The helical transmembrane segment at 189–209 (MIYTVGYSVSLASLTVAVLIL) threads the bilayer. Over 210-223 (AYFRRLHCTRNYIH) the chain is Cytoplasmic. Residues 224-244 (MHLFLSFMLRAVSIFVKDAVL) form a helical membrane-spanning segment. At 245 to 294 (YSGATLDEAERLTEEELRAIAQAPPPPTAAAGYAGCRVAVTFFLYFLATN) the chain is on the extracellular side. The helical transmembrane segment at 295 to 315 (YYWILVEGLYLHSLIFMAFFS) threads the bilayer. Residues 316–318 (EKK) lie on the Cytoplasmic side of the membrane. Residues 319–339 (YLWGFTVFGWGLPAVFVAVWV) traverse the membrane as a helical segment. Residues 340–360 (SVRATLANTGCWDLSSGNKKW) lie on the Extracellular side of the membrane. Residues 361-381 (IIQVPILASIVLNFILFINIV) form a helical membrane-spanning segment. At 382 to 404 (RVLATKLRETNAGRCDTRQQYRK) the chain is on the cytoplasmic side. The helical transmembrane segment at 405-425 (LLKSTLVLMPLFGVHYIVFMA) threads the bilayer. Residues 426-439 (TPYTEVSGTLWQVQ) are Extracellular-facing. A helical membrane pass occupies residues 440-460 (MHYEMLFNSFQGFFVAIIYCF). Over 461–595 (CNGEVQAEIK…LLQEEWETVM (135 aa)) the chain is Cytoplasmic. The Important for interaction with G proteins signature appears at 473-476 (WSRW). Residues 528 to 595 (TTTATTNGHP…LLQEEWETVM (68 aa)) are disordered. The span at 547–559 (APTLPATPPATAA) shows a compositional bias: low complexity. Phosphothreonine is present on Thr553.

The protein belongs to the G-protein coupled receptor 2 family. Homodimer in the absence of bound ligand. Peptide hormone binding leads to dissociation of the homodimer. N-glycosylated. High levels in the kidney, with much lower levels in aorta, heart, lung, prostate, testis, and skeletal muscle.

The protein resides in the cell membrane. G-protein-coupled receptor for parathyroid hormone (PTH) and for parathyroid hormone-related peptide (PTHLH). Ligand binding causes a conformation change that triggers signaling via guanine nucleotide-binding proteins (G proteins) and modulates the activity of downstream effectors, such as adenylate cyclase (cAMP). PTH1R is coupled to G(s) G alpha proteins and mediates activation of adenylate cyclase activity. PTHLH dissociates from PTH1R more rapidly than PTH; as consequence, the cAMP response induced by PTHLH decays faster than the response induced by PTH. In Canis lupus familiaris (Dog), this protein is Parathyroid hormone/parathyroid hormone-related peptide receptor (PTH1R).